A 392-amino-acid chain; its full sequence is Phospho-N-acetylmuramoyl-pentapeptide-transferase (392 aa).

Helical transmembrane passes span 29–49, 76–96, 100–120, 137–157, 193–213, 225–245, 262–282, 289–309, 314–334, and 369–389; these read AVMA…FVIR, TMGG…WFDL, FVWI…ADDW, YLWQ…SISE, ISYP…IVGS, GLAI…AYVT, SGEL…FLWF, VFMG…IAVI, IVLA…MMQV, and QVVV…LSTL.

It belongs to the glycosyltransferase 4 family. MraY subfamily. Mg(2+) is required as a cofactor.

The protein resides in the cell inner membrane. The catalysed reaction is UDP-N-acetyl-alpha-D-muramoyl-L-alanyl-gamma-D-glutamyl-meso-2,6-diaminopimeloyl-D-alanyl-D-alanine + di-trans,octa-cis-undecaprenyl phosphate = di-trans,octa-cis-undecaprenyl diphospho-N-acetyl-alpha-D-muramoyl-L-alanyl-D-glutamyl-meso-2,6-diaminopimeloyl-D-alanyl-D-alanine + UMP. It participates in cell wall biogenesis; peptidoglycan biosynthesis. Functionally, catalyzes the initial step of the lipid cycle reactions in the biosynthesis of the cell wall peptidoglycan: transfers peptidoglycan precursor phospho-MurNAc-pentapeptide from UDP-MurNAc-pentapeptide onto the lipid carrier undecaprenyl phosphate, yielding undecaprenyl-pyrophosphoryl-MurNAc-pentapeptide, known as lipid I. This Polaromonas sp. (strain JS666 / ATCC BAA-500) protein is Phospho-N-acetylmuramoyl-pentapeptide-transferase.